The chain runs to 432 residues: Putative D-alanyl-D-alanine carboxypeptidase (432 aa).

A helical; Signal-anchor transmembrane segment spans residues 7-25 (ATVLLTFSLSAFAVEYPVL).

This sequence belongs to the peptidase S12 family. YfeW subfamily.

The protein resides in the cell inner membrane. It catalyses the reaction Preferential cleavage: (Ac)2-L-Lys-D-Ala-|-D-Ala. Also transpeptidation of peptidyl-alanyl moieties that are N-acyl substituents of D-alanine.. The polypeptide is Putative D-alanyl-D-alanine carboxypeptidase (Salmonella enteritidis PT4 (strain P125109)).